Here is a 310-residue protein sequence, read N- to C-terminus: Homoserine kinase (310 aa).

91–101 (PIGSGLGSSAC) provides a ligand contact to ATP.

The protein belongs to the GHMP kinase family. Homoserine kinase subfamily.

The protein resides in the cytoplasm. It carries out the reaction L-homoserine + ATP = O-phospho-L-homoserine + ADP + H(+). It functions in the pathway amino-acid biosynthesis; L-threonine biosynthesis; L-threonine from L-aspartate: step 4/5. Its function is as follows. Catalyzes the ATP-dependent phosphorylation of L-homoserine to L-homoserine phosphate. This Escherichia coli (strain K12 / MC4100 / BW2952) protein is Homoserine kinase.